A 331-amino-acid chain; its full sequence is Holliday junction branch migration complex subunit RuvB (331 aa).

Residues 1–182 (MDDRMVDQAL…FGVHLRLEYY (182 aa)) form a large ATPase domain (RuvB-L) region. Residues Leu-21, Arg-22, Gly-63, Lys-66, Thr-67, Thr-68, 129-131 (EDF), Arg-172, Tyr-182, and Arg-219 contribute to the ATP site. Position 67 (Thr-67) interacts with Mg(2+). The small ATPAse domain (RuvB-S) stretch occupies residues 183-253 (NENDLKEIII…TTKQALQLLQ (71 aa)). Residues 256 to 331 (AEGLDYIDHK…AYEHFKNFNK (76 aa)) form a head domain (RuvB-H) region. Residues Arg-292, Arg-311, and Arg-316 each contribute to the DNA site.

It belongs to the RuvB family. As to quaternary structure, homohexamer. Forms an RuvA(8)-RuvB(12)-Holliday junction (HJ) complex. HJ DNA is sandwiched between 2 RuvA tetramers; dsDNA enters through RuvA and exits via RuvB. An RuvB hexamer assembles on each DNA strand where it exits the tetramer. Each RuvB hexamer is contacted by two RuvA subunits (via domain III) on 2 adjacent RuvB subunits; this complex drives branch migration. In the full resolvosome a probable DNA-RuvA(4)-RuvB(12)-RuvC(2) complex forms which resolves the HJ.

It localises to the cytoplasm. It carries out the reaction ATP + H2O = ADP + phosphate + H(+). Functionally, the RuvA-RuvB-RuvC complex processes Holliday junction (HJ) DNA during genetic recombination and DNA repair, while the RuvA-RuvB complex plays an important role in the rescue of blocked DNA replication forks via replication fork reversal (RFR). RuvA specifically binds to HJ cruciform DNA, conferring on it an open structure. The RuvB hexamer acts as an ATP-dependent pump, pulling dsDNA into and through the RuvAB complex. RuvB forms 2 homohexamers on either side of HJ DNA bound by 1 or 2 RuvA tetramers; 4 subunits per hexamer contact DNA at a time. Coordinated motions by a converter formed by DNA-disengaged RuvB subunits stimulates ATP hydrolysis and nucleotide exchange. Immobilization of the converter enables RuvB to convert the ATP-contained energy into a lever motion, pulling 2 nucleotides of DNA out of the RuvA tetramer per ATP hydrolyzed, thus driving DNA branch migration. The RuvB motors rotate together with the DNA substrate, which together with the progressing nucleotide cycle form the mechanistic basis for DNA recombination by continuous HJ branch migration. Branch migration allows RuvC to scan DNA until it finds its consensus sequence, where it cleaves and resolves cruciform DNA. This chain is Holliday junction branch migration complex subunit RuvB, found in Staphylococcus haemolyticus (strain JCSC1435).